The following is a 510-amino-acid chain: Alpha-L-arabinofuranosidase B (510 aa).

The N-terminal stretch at 1 to 24 (MTMSRSSRSSVLALALATGSLVAA) is a signal peptide. Residues 25-342 (GPCDIYSSGG…ADIVAAKYAT (318 aa)) form a catalytic region. 3 cysteine pairs are disulfide-bonded: C27/C37, C87/C92, and C182/C183. Residue N89 is glycosylated (N-linked (GlcNAc...) asparagine). D225 contacts substrate. E227 serves as the catalytic Nucleophile. Substrate-binding residues include N228 and G303. The active-site Proton donor is the D304. The interval 343–510 (TSLISGPALT…VSWVVADGFA (168 aa)) is ABD. Cysteines 412 and 450 form a disulfide. Positions 427, 429, 430, 446, 475, 477, 480, and 500 each coordinate substrate.

Belongs to the glycosyl hydrolase 54 family.

It is found in the secreted. It catalyses the reaction Hydrolysis of terminal non-reducing alpha-L-arabinofuranoside residues in alpha-L-arabinosides.. It participates in glycan metabolism; L-arabinan degradation. Functionally, alpha-L-arabinofuranosidase involved in the degradation of arabinoxylan, a major component of plant hemicellulose. Able to hydrolyze 1,5-, 1,3- and 1,2-alpha-linkages not only in L-arabinofuranosyl oligosaccharides, but also in polysaccharides containing terminal non-reducing L-arabinofuranoses in side chains, like L-arabinan, arabinogalactan and arabinoxylan. This chain is Alpha-L-arabinofuranosidase B (abfB), found in Emericella nidulans (strain FGSC A4 / ATCC 38163 / CBS 112.46 / NRRL 194 / M139) (Aspergillus nidulans).